The chain runs to 163 residues: Phosphopantetheine adenylyltransferase (163 aa).

Threonine 10 is a binding site for substrate. Residues 10–11 (TF) and histidine 18 each bind ATP. The substrate site is built by lysine 42, leucine 74, and arginine 88. ATP is bound by residues 89–91 (GLR), glutamate 99, and 124–130 (NSFISST).

It belongs to the bacterial CoaD family. Homohexamer. Mg(2+) serves as cofactor.

Its subcellular location is the cytoplasm. The catalysed reaction is (R)-4'-phosphopantetheine + ATP + H(+) = 3'-dephospho-CoA + diphosphate. It participates in cofactor biosynthesis; coenzyme A biosynthesis; CoA from (R)-pantothenate: step 4/5. In terms of biological role, reversibly transfers an adenylyl group from ATP to 4'-phosphopantetheine, yielding dephospho-CoA (dPCoA) and pyrophosphate. This is Phosphopantetheine adenylyltransferase from Shewanella sp. (strain W3-18-1).